The following is a 796-amino-acid chain: Probable coatomer subunit beta' (796 aa).

6 WD repeats span residues 4 to 42 (LDFQRKLLSHTERVKAVDFHPTEPWVIASHYNGQVGIWN), 46 to 84 (QTLVRSFDINDVPIRACAFIARKNWFVCGSDDFQVRVYN), 88 to 126 (GEKVTQFEAHPDYIRALVVHPTQPFLLTSSDDMTIKCFN), 131 to 170 (WKCVQTFEGHSRYVMSLAINPKDTNTFASSCLDGTVKVWS), 172 to 214 (GSSV…KVWD), and 218 to 256 (KACVRILEGHTNNVSFAFFHSKFPIIISGSEDGTVKIWH).

The protein belongs to the WD repeat COPB2 family. In terms of assembly, oligomeric complex that consists of at least the alpha, beta, beta', gamma, delta, epsilon and zeta subunits.

It localises to the cytoplasm. Its subcellular location is the golgi apparatus membrane. It is found in the cytoplasmic vesicle. The protein localises to the COPI-coated vesicle membrane. Its function is as follows. The coatomer is a cytosolic protein complex that binds to dilysine motifs and reversibly associates with Golgi non-clathrin-coated vesicles, which further mediate biosynthetic protein transport from the ER, via the Golgi up to the trans Golgi network. Coatomer complex is required for budding from Golgi membranes, and is essential for the retrograde Golgi-to-ER transport of dilysine-tagged proteins. This Schizosaccharomyces pombe (strain 972 / ATCC 24843) (Fission yeast) protein is Probable coatomer subunit beta' (sec27).